Here is a 448-residue protein sequence, read N- to C-terminus: MSLVDLGKRLLEAARKGQDDEVRTLMANGAPFTTDWLGTSPLHLAAQYGHYSTAEVLLRAGVSRDARTKVDRTPLHMAAADGHAHIVELLVRNGADVNAKDMLKMTALHWATERHHRDVVELLIKYGADVHAFSKFDKSAFDIALEKNNAEILVILQEAMQNQVNVNPERANPVTDPVSMAAPFIFTSGEVVNLASLISSTNTKTTSGDPHASTVQFSNSTTSVLATLAALAEASVPLSNSHRATANTEEIIEGNSVDSSIQQVMGSGGQRVITIVTDGVPLGNIQTSIPTGGIGQPFIVTVQDGQQVLTVPAGKVAEETVIKEEEEEKLPLTKKPRIGEKTNSVEESKEGNERELLQQQLQEANRRAQEYRHQLLKKEQEAEQYRLKLEAIARQQPNGVDFTMVEEVAEVDAVVVTEGELEERETKVTGSAGTTEPHTRVSMATVSS.

ANK repeat units follow at residues 5–34 (DLGK…PFTT), 37–66 (LGTS…SRDA), 70–99 (VDRT…DVNA), 103–132 (LKMT…DVHA), and 136–166 (FDKS…QVNV). A Phosphoserine modification is found at serine 256. 2 disordered regions span residues 325-354 (EEEE…GNER) and 420-448 (ELEE…TVSS). Residues 337–354 (RIGEKTNSVEESKEGNER) show a composition bias toward basic and acidic residues. Residues 345 to 395 (VEESKEGNERELLQQQLQEANRRAQEYRHQLLKKEQEAEQYRLKLEAIARQ) are a coiled coil. Positions 428–448 (VTGSAGTTEPHTRVSMATVSS) are enriched in polar residues.

In terms of assembly, heterotetramer of two alpha and two beta subunits. The C-terminal is necessary for the formation of a heterotetrameric GABP-alpha-2/beta-2 complex, and also facilitates homotypic dimerization. Interacts with ADGRB2.

Its subcellular location is the nucleus. Functionally, may function as transcription factor capable of interacting with purine rich repeats (GA repeats). In Homo sapiens (Human), this protein is GA-binding protein subunit beta-2 (GABPB2).